A 126-amino-acid chain; its full sequence is C-X-C motif chemokine 9 (126 aa).

The N-terminal stretch at 1-21 (MKSAVLFLLGIIFLEQCGVRG) is a signal peptide. Intrachain disulfides connect Cys-30–Cys-57 and Cys-32–Cys-73. Asn-58 carries N-linked (GlcNAc...) asparagine glycosylation. The disordered stretch occupies residues 91–126 (KISQKKKQKRGKKHQKNMKNRKPKTPQSRRRSRKTT). The segment covering 93–126 (SQKKKQKRGKKHQKNMKNRKPKTPQSRRRSRKTT) has biased composition (basic residues).

The protein belongs to the intercrine alpha (chemokine CxC) family.

It localises to the secreted. Functionally, may be a cytokine that affects the growth, movement, or activation state of cells that participate in immune and inflammatory response. This chain is C-X-C motif chemokine 9 (Cxcl9), found in Mus musculus (Mouse).